The primary structure comprises 23 residues: Textile convulsant peptide (23 aa).

3 disulfide bridges follow: Cys2-Cys10, Cys5-Cys15, and Cys9-Cys20. Pro23 carries the proline amide; partial modification.

In terms of processing, the C-terminal amidation is described in Ref.1 and PubMed:23031820, but not in PubMed:22709442 and PubMed:36235146. Ju et al. (2022) describe a disulfide connectivity (C55-C61; C56-C69; C66-C68) that differs for the usual one. As to expression, expressed by the venom duct. Is present in all duct parts with a highest content in part 2 (proximal of the venom bulb) and then decreases in concentration toward the end of the duct.

The protein resides in the secreted. Functionally, causes convulsions mice. This Conus textile (Cloth-of-gold cone) protein is Textile convulsant peptide.